A 441-amino-acid chain; its full sequence is DNA-binding protein (441 aa).

Residues 1–18 show a composition bias toward basic residues; it reads MERTPKRAHGFRSTKPVK. Residues 1–85 are disordered; it reads MERTPKRAHG…EESPEAPLSD (85 aa). 2 stretches are compositionally biased toward acidic residues: residues 24 to 33 and 67 to 79; these read MMEEEEEEVE and VDDE…EESP. The Zn(2+) site is built by Cys191 and His193. The flexible loop stretch occupies residues 204 to 236; sequence VELNPSSEAGKRALAEQNGVIEKNRFGRQVVVL. Positions 244, 262, 305, 307, 359, and 380 each coordinate Zn(2+). A C-terminal arm, DBP binding region spans residues 426 to 441; the sequence is EVLAPVSPIASDDPFA.

The protein belongs to the adenoviridae E2A DNA-binding protein family. Homomultimerizes on viral ssDNA bound to pTP. Forms a initiation complex with viral polymerase, pTP and hosts NFIA and POU2F1/OCT1. Interacts with host SRCAP.

The protein localises to the host nucleus. Plays a role in the elongation phase of viral strand displacement replication by unwinding the template in an ATP-independent fashion, employing its capacity to form multimers. Also enhances the rate of initiation. Released from template upon second strand synthesis. Assembles in complex with viral pTP, viral pol, host NFIA and host POU2F1/OCT1 on viral origin of replication. Covers the whole ssDNA genome during synthesis. The complementary strand synthesis induces its relese from DNA template. May inhibit cellular transcription mediated by the interaction between host SRCAP and CBP. The sequence is that of DNA-binding protein from Fowl adenovirus A serotype 1 (strain CELO / Phelps) (FAdV-1).